The primary structure comprises 389 residues: 26S proteasome non-ATPase regulatory subunit 6 (389 aa).

In terms of domain architecture, PCI spans 193–361; that stretch reads DFKQAAELFL…EIVETNRPDS (169 aa).

The protein belongs to the proteasome subunit S10 family. Component of the 19S proteasome regulatory particle complex. The 26S proteasome consists of a 20S core particle (CP) and two 19S regulatory subunits (RP). The regulatory particle is made of a lid composed of 9 subunits including PSMD6, a base containing 6 ATPases and few additional components.

Component of the 26S proteasome, a multiprotein complex involved in the ATP-dependent degradation of ubiquitinated proteins. This complex plays a key role in the maintenance of protein homeostasis by removing misfolded or damaged proteins, which could impair cellular functions, and by removing proteins whose functions are no longer required. Therefore, the proteasome participates in numerous cellular processes, including cell cycle progression, apoptosis, or DNA damage repair. The polypeptide is 26S proteasome non-ATPase regulatory subunit 6 (PSMD6) (Homo sapiens (Human)).